Consider the following 382-residue polypeptide: Na(+)/H(+) antiporter NhaA 2 (382 aa).

11 helical membrane-spanning segments follow: residues 7–27 (MVLS…LALL), 58–78 (LDLW…GLEL), 94–114 (SLPI…FAAI), 124–144 (GWAI…MLLG), 153–173 (LFLL…IALF), 178–198 (LSAL…LLNY), 199–219 (YHIT…IAML), 255–275 (NPWV…GIDI), 291–311 (IILG…FIAI), 327–347 (FYGI…IDGL), and 361–381 (LAIL…LKIV).

This sequence belongs to the NhaA Na(+)/H(+) (TC 2.A.33) antiporter family.

The protein resides in the cell inner membrane. It carries out the reaction Na(+)(in) + 2 H(+)(out) = Na(+)(out) + 2 H(+)(in). Na(+)/H(+) antiporter that extrudes sodium in exchange for external protons. This Campylobacter jejuni subsp. jejuni serotype O:6 (strain 81116 / NCTC 11828) protein is Na(+)/H(+) antiporter NhaA 2.